A 249-amino-acid polypeptide reads, in one-letter code: Ribonuclease PH (249 aa).

Residues R90 and 128 to 130 each bind phosphate; that span reads GTR.

Belongs to the RNase PH family. As to quaternary structure, homohexameric ring arranged as a trimer of dimers.

The enzyme catalyses tRNA(n+1) + phosphate = tRNA(n) + a ribonucleoside 5'-diphosphate. Its function is as follows. Phosphorolytic 3'-5' exoribonuclease that plays an important role in tRNA 3'-end maturation. Removes nucleotide residues following the 3'-CCA terminus of tRNAs; can also add nucleotides to the ends of RNA molecules by using nucleoside diphosphates as substrates, but this may not be physiologically important. Probably plays a role in initiation of 16S rRNA degradation (leading to ribosome degradation) during starvation. The chain is Ribonuclease PH from Parasynechococcus marenigrum (strain WH8102).